A 73-amino-acid polypeptide reads, in one-letter code: U3-agatoxin-Ao1e (73 aa).

An N-terminal signal peptide occupies residues 1–20 (MRTIISLLLLSAMVFAVIEA). Residues 21 to 34 (ISLEEGLQLFEGER) constitute a propeptide that is removed on maturation. 4 disulfide bridges follow: Cys36–Cys52, Cys43–Cys57, Cys51–Cys67, and Cys59–Cys65. Asn71 is modified (asparagine amide).

This sequence belongs to the neurotoxin 07 (Beta/delta-agtx) family. 03 (aga-4) subfamily. Aga sub-subfamily. As to expression, expressed by the venom gland.

It is found in the secreted. In terms of biological role, insecticidal neurotoxin that induces an irreversible spastic paralysis when injected into insects. Modifies presynaptic voltage-gated sodium channels (Nav), causing them to open at the normal resting potential of the nerve. This leads to spontaneous release of neurotransmitter and repetitive action potentials in motor neurons. The polypeptide is U3-agatoxin-Ao1e (Agelena orientalis (Funnel-web spider)).